We begin with the raw amino-acid sequence, 282 residues long: NADPH-dependent 7-cyano-7-deazaguanine reductase (282 aa).

A substrate-binding site is contributed by 88-90 (IES). 90-91 (SK) contacts NADPH. Cysteine 190 functions as the Thioimide intermediate in the catalytic mechanism. The active-site Proton donor is the aspartate 197. 229–230 (HE) provides a ligand contact to substrate. 258–259 (RG) lines the NADPH pocket.

It belongs to the GTP cyclohydrolase I family. QueF type 2 subfamily. Homodimer.

It localises to the cytoplasm. It carries out the reaction 7-aminomethyl-7-carbaguanine + 2 NADP(+) = 7-cyano-7-deazaguanine + 2 NADPH + 3 H(+). The protein operates within tRNA modification; tRNA-queuosine biosynthesis. Catalyzes the NADPH-dependent reduction of 7-cyano-7-deazaguanine (preQ0) to 7-aminomethyl-7-deazaguanine (preQ1). The sequence is that of NADPH-dependent 7-cyano-7-deazaguanine reductase from Escherichia coli O139:H28 (strain E24377A / ETEC).